We begin with the raw amino-acid sequence, 366 residues long: Aminomethyltransferase (366 aa).

The protein belongs to the GcvT family. As to quaternary structure, the glycine cleavage system is composed of four proteins: P, T, L and H.

It catalyses the reaction N(6)-[(R)-S(8)-aminomethyldihydrolipoyl]-L-lysyl-[protein] + (6S)-5,6,7,8-tetrahydrofolate = N(6)-[(R)-dihydrolipoyl]-L-lysyl-[protein] + (6R)-5,10-methylene-5,6,7,8-tetrahydrofolate + NH4(+). In terms of biological role, the glycine cleavage system catalyzes the degradation of glycine. The protein is Aminomethyltransferase of Sodalis glossinidius (strain morsitans).